We begin with the raw amino-acid sequence, 396 residues long: MIISAASDYRAAAQRILPPFLFHYMDGGAYSEYTLRRNVEDLSEVALRQRILKNMSDLSLETTLFNEKLSMPVALGPVGLCGMYARRGEVQAAKAADAHGIPFTLSTVSVCPIEEVAPAIKRPMWFQLYVLRDRGFMRNALERAKAAGCSTLVFTVDMPTPGARYRDAHSGMSGPNAAMRRYLQAVTHPQWAWDVGLNGRPHDLGNISAYLGKPTGLEDYIGWLGNNFDPSISWKDLEWIRDFWDGPMVIKGILDPEDARDAVRFGADGIVVSNHGGRQLDGVLSSARALPAIADAVKGDIAILADSGIRNGLDVVRMIALGADTILLGRAFLYALATAGQAGVANLLNLIEKEMKVAMTLTGAKSISEITQDSLVQGLGKELPAALAPMAKGNAA.

Residues 1 to 380 (MIISAASDYR…TQDSLVQGLG (380 aa)) enclose the FMN hydroxy acid dehydrogenase domain. Residue Y24 participates in substrate binding. Residues S106 and Q127 each contribute to the FMN site. Y129 provides a ligand contact to substrate. T155 is a binding site for FMN. R164 provides a ligand contact to substrate. K251 lines the FMN pocket. H275 serves as the catalytic Proton acceptor. Position 278 (R278) interacts with substrate. 306–330 (DSGIRNGLDVVRMIALGADTILLGR) is a binding site for FMN.

Belongs to the FMN-dependent alpha-hydroxy acid dehydrogenase family. FMN serves as cofactor.

It localises to the cell inner membrane. The catalysed reaction is (S)-lactate + A = pyruvate + AH2. In terms of biological role, catalyzes the conversion of L-lactate to pyruvate. Is coupled to the respiratory chain. The chain is L-lactate dehydrogenase from Escherichia coli O81 (strain ED1a).